The chain runs to 127 residues: MRHRNSGRSFSRTSSHRKAMFSNMCCSLIEHELIRTTLPKAKDLRRYIEPLITVSKSDSVASRRRAFDILRSKSAVGKLFTDLGPRFAKRPGGYIRIIKCGYRDGDNAPMAIVELMDRPVSSDDTEE.

Belongs to the bacterial ribosomal protein bL17 family. In terms of assembly, part of the 50S ribosomal subunit. Contacts protein L32.

The chain is Large ribosomal subunit protein bL17 from Legionella pneumophila (strain Corby).